The chain runs to 122 residues: Large ribosomal subunit protein bL19 (122 aa).

This sequence belongs to the bacterial ribosomal protein bL19 family.

Its function is as follows. This protein is located at the 30S-50S ribosomal subunit interface and may play a role in the structure and function of the aminoacyl-tRNA binding site. The chain is Large ribosomal subunit protein bL19 from Novosphingobium aromaticivorans (strain ATCC 700278 / DSM 12444 / CCUG 56034 / CIP 105152 / NBRC 16084 / F199).